The chain runs to 152 residues: Large ribosomal subunit protein uL13 (152 aa).

The segment at 133–152 (EHPHQAQKPQPLTINTIPGA) is disordered. The segment covering 139–152 (QKPQPLTINTIPGA) has biased composition (polar residues).

Belongs to the universal ribosomal protein uL13 family. As to quaternary structure, part of the 50S ribosomal subunit.

In terms of biological role, this protein is one of the early assembly proteins of the 50S ribosomal subunit, although it is not seen to bind rRNA by itself. It is important during the early stages of 50S assembly. The sequence is that of Large ribosomal subunit protein uL13 from Thermosynechococcus vestitus (strain NIES-2133 / IAM M-273 / BP-1).